We begin with the raw amino-acid sequence, 296 residues long: Fructose-bisphosphate aldolase class 1 (296 aa).

The Proton acceptor role is filled by Glu175. Residue Lys212 is the Schiff-base intermediate with dihydroxyacetone-P of the active site.

It belongs to the class I fructose-bisphosphate aldolase family.

The enzyme catalyses beta-D-fructose 1,6-bisphosphate = D-glyceraldehyde 3-phosphate + dihydroxyacetone phosphate. It functions in the pathway carbohydrate degradation; glycolysis; D-glyceraldehyde 3-phosphate and glycerone phosphate from D-glucose: step 4/4. This chain is Fructose-bisphosphate aldolase class 1, found in Staphylococcus haemolyticus (strain JCSC1435).